A 772-amino-acid chain; its full sequence is Delta-like protein A (772 aa).

An N-terminal signal peptide occupies residues 1-20; sequence MGRHLLLLLFSILYMLLCQA. At 21 to 536 the chain is on the extracellular side; that stretch reads SSSGVFELKL…SQIASDVPWT (516 aa). Residues 179–223 form the DSL domain; the sequence is FVCDEHYYGEGCSVFCRPRDDAFGHFTCGERGEIICDAGWKGQYC. 26 disulfide bridges follow: Cys-181–Cys-190, Cys-194–Cys-206, Cys-214–Cys-223, Cys-228–Cys-239, Cys-232–Cys-245, Cys-259–Cys-270, Cys-265–Cys-276, Cys-278–Cys-287, Cys-294–Cys-306, Cys-300–Cys-316, Cys-318–Cys-327, Cys-334–Cys-345, Cys-339–Cys-354, Cys-356–Cys-365, Cys-372–Cys-383, Cys-377–Cys-393, Cys-395–Cys-404, Cys-411–Cys-422, Cys-416–Cys-431, Cys-433–Cys-442, Cys-449–Cys-460, Cys-454–Cys-469, Cys-471–Cys-480, Cys-487–Cys-498, Cys-492–Cys-507, and Cys-509–Cys-518. EGF-like domains are found at residues 225-257, 257-288, and 290-328; these read EPICLPGCDEEHGFCEKPGECKCRVGFKGRYCD, DECIRYPGCLHGTCQQPWQCNCQEGWGGLFCN, and DLNYCTHHKPCLNGATCSNTGQGSYTCSCRPGFSGASCE. One can recognise an EGF-like 4; calcium-binding domain in the interval 330-366; that stretch reads EVNECTGNPCRNGGSCTDMENTYSCTCPPGFYGKNCE. EGF-like domains are found at residues 368 to 405, 407 to 443, 445 to 481, and 483 to 519; these read SAMTCADGPCFNGGRCADNPDGGYFCQCPTGYAGFNCE, KIDHCSSSPCSNGARCVDLVNSYLCQCPDGFTGMNCD, AGDECSMYPCQNGGTCQEGASGYMCTCPPGYTGRNCS, and PVSRCQHNPCHNGATCHERNNRYVCACVSGYGGRNCQ. An N-linked (GlcNAc...) asparagine glycan is attached at Asn-479. Residues 537 to 557 form a helical membrane-spanning segment; that stretch reads AVGSGVLLVLLLVVACAVVVV. Residues 558–772 are Cytoplasmic-facing; the sequence is CVRSKVQQRR…KDECVIATEV (215 aa). The tract at residues 688–722 is disordered; sequence EEKRRKRLKSDASEKSKYSESRYSESKYSESKYSE. The segment covering 696 to 722 has biased composition (basic and acidic residues); it reads KSDASEKSKYSESRYSESKYSESKYSE.

As to quaternary structure, interacts with mib. Post-translationally, ubiquitinated by mib, leading to its endocytosis and subsequent degradation. Ubiquitinated by the ECS(ASB11) complex, leading to its degradation by the proteasome. In terms of tissue distribution, expressed in nervous system. In the developing nervous system, it is expressed in overlapping regions with deltaB (dlb) and deltaD (dld); in the neural plate, dla is expressed in patches of contiguous cells with dld, while dlb is confined to scattered cells within those patches that will differentiate as neurons. In 24 hours embryos, expressed in the hindbrain in stripes adjacent to rhombomere boundaries, but not in the actual boundary cells. During gastrulation and tail formation, expressed in embryonic midline cells. Expressed in hair cells of inner ear.

The protein resides in the membrane. In terms of biological role, acts as a ligand for Notch receptors and is involved in primary neurogenesis. Can activate Notch receptors, thereby playing a key role in lateral inhibition, a process that prevents the immediate neighbors of each nascent neural cell from simultaneously embarking on neural differentiation. Required for boundary formation during segmentation of the hindbrain. Required for midline cell fate specification prior to germ layer formation; regulates specification of floorplate, notochord and hypochord. In inner ear, it prevents adjacent cells from adopting the same cell fate. Plays a role in angiogenesis. This Danio rerio (Zebrafish) protein is Delta-like protein A (dla).